A 427-amino-acid chain; its full sequence is Acetyl-CoA acetyltransferase, mitochondrial (427 aa).

A mitochondrion-targeting transit peptide spans 1-33 (MAVLAALLRSGARSRSPLLRRLVQEIRYVERSY). Lys66 carries the post-translational modification N6-acetyllysine; alternate. At Lys66 the chain carries N6-succinyllysine; alternate. Residue Lys78 is modified to N6-succinyllysine. Cys126 (acyl-thioester intermediate) is an active-site residue. N6-acetyllysine; alternate occurs at positions 174, 181, 190, and 202. N6-succinyllysine; alternate occurs at positions 174, 181, 190, and 202. Tyr219 is a CoA binding site. A K(+)-binding site is contributed by Tyr219. Lys223 and Lys230 each carry N6-acetyllysine; alternate. Lys223 and Lys230 each carry N6-succinyllysine; alternate. At Lys243 the chain carries N6-succinyllysine. Residues Lys251 and Lys257 each carry the N6-acetyllysine modification. CoA is bound by residues 258–260 (RVD) and Lys263. Lys263 is subject to N6-acetyllysine; alternate. Lys263 carries the post-translational modification N6-succinyllysine; alternate. N6-succinyllysine is present on residues Lys266 and Lys268. The residue at position 273 (Lys273) is an N6-acetyllysine. K(+) is bound by residues Ala280, Ala281, and Ala283. Ser284 provides a ligand contact to CoA. The residue at position 338 (Lys338) is an N6-acetyllysine. Residue Val381 participates in K(+) binding. Cys413 acts as the Proton donor/acceptor in catalysis.

This sequence belongs to the thiolase-like superfamily. Thiolase family. In terms of assembly, homotetramer. Post-translationally, succinylation at Lys-268, adjacent to a coenzyme A binding site. Desuccinylated by SIRT5.

The protein resides in the mitochondrion. It carries out the reaction 2 acetyl-CoA = acetoacetyl-CoA + CoA. The catalysed reaction is propanoyl-CoA + acetyl-CoA = 2-methyl-3-oxobutanoyl-CoA + CoA. It functions in the pathway lipid metabolism; fatty acid beta-oxidation. Activated by potassium ions, but not sodium ions. Functionally, this is one of the enzymes that catalyzes the last step of the mitochondrial beta-oxidation pathway, an aerobic process breaking down fatty acids into acetyl-CoA. Using free coenzyme A/CoA, catalyzes the thiolytic cleavage of medium- to long-chain 3-oxoacyl-CoAs into acetyl-CoA and a fatty acyl-CoA shortened by two carbon atoms. The activity of the enzyme is reversible and it can also catalyze the condensation of two acetyl-CoA molecules into acetoacetyl-CoA. Thereby, it plays a major role in ketone body metabolism. This is Acetyl-CoA acetyltransferase, mitochondrial (ACAT1) from Homo sapiens (Human).